We begin with the raw amino-acid sequence, 402 residues long: Propionate kinase (402 aa).

The ATP site is built by asparagine 11 and lysine 18. Position 11 (asparagine 11) interacts with Mg(2+). Arginine 86 is a binding site for substrate. The active-site Proton donor/acceptor is aspartate 143. ATP-binding positions include histidine 175, histidine 203–glycine 207, aspartate 278–arginine 280, and glycine 326–asparagine 330.

This sequence belongs to the acetokinase family. TdcD subfamily. In terms of assembly, homodimer. Requires Mg(2+) as cofactor.

It catalyses the reaction propanoate + ATP = propanoyl phosphate + ADP. It functions in the pathway amino-acid degradation; L-threonine degradation via propanoate pathway; propanoate from L-threonine: step 4/4. In terms of biological role, catalyzes the conversion of propionyl phosphate and ADP to propionate and ATP. The chain is Propionate kinase from Citrobacter koseri (strain ATCC BAA-895 / CDC 4225-83 / SGSC4696).